The primary structure comprises 184 residues: Peptide deformylase (184 aa).

2 residues coordinate Fe cation: Cys-111 and His-154. Glu-155 is a catalytic residue. His-158 contacts Fe cation.

The protein belongs to the polypeptide deformylase family. Fe(2+) is required as a cofactor.

It catalyses the reaction N-terminal N-formyl-L-methionyl-[peptide] + H2O = N-terminal L-methionyl-[peptide] + formate. Removes the formyl group from the N-terminal Met of newly synthesized proteins. Requires at least a dipeptide for an efficient rate of reaction. N-terminal L-methionine is a prerequisite for activity but the enzyme has broad specificity at other positions. This is Peptide deformylase from Lactobacillus helveticus (strain DPC 4571).